A 350-amino-acid polypeptide reads, in one-letter code: Purine-binding protein BAB2_0673 (350 aa).

The N-terminal stretch at 1 to 17 is a signal peptide; that stretch reads MVIATVAGFMLGGAAHA. 3 residues coordinate adenine: Trp-36, Trp-185, and Asp-211.

This sequence belongs to the BMP lipoprotein family.

Binds adenine and probably also other purines, such as guanine. May play a role in adenine and guanine uptake. May be part of an ABC-type uptake system for adenine and similar ligands. This is Purine-binding protein BAB2_0673 from Brucella abortus (strain 2308).